Here is a 168-residue protein sequence, read N- to C-terminus: Small ribosomal subunit protein uS9 (168 aa).

The segment at 1 to 38 is disordered; it reads MAKIADSIDSAQADSVENVESYSTETPESAAPAAPRPV. Polar residues predominate over residues 9-22; it reads DSAQADSVENVESY. Low complexity predominate over residues 23–37; sequence STETPESAAPAAPRP.

This sequence belongs to the universal ribosomal protein uS9 family.

The protein is Small ribosomal subunit protein uS9 of Leifsonia xyli subsp. xyli (strain CTCB07).